A 308-amino-acid chain; its full sequence is Cytochrome c biogenesis protein CcsA (308 aa).

A run of 7 helical transmembrane segments spans residues Ile-2–Ile-22, Gly-44–Gly-64, Leu-71–Phe-91, Met-143–Ile-163, Val-212–Asn-232, Trp-247–Leu-267, and Ala-273–Val-293.

The protein belongs to the CcmF/CycK/Ccl1/NrfE/CcsA family. May interact with Ccs1.

It localises to the plastid membrane. In terms of biological role, required during biogenesis of c-type cytochromes (cytochrome c6 and cytochrome f) at the step of heme attachment. The sequence is that of Cytochrome c biogenesis protein CcsA from Cuscuta reflexa (Southern Asian dodder).